We begin with the raw amino-acid sequence, 409 residues long: Ubiquitin-associated domain-containing protein 1 (409 aa).

Met1 is subject to N-acetylmethionine. In terms of domain architecture, Ubiquitin-like spans 14 to 98 (LRLHICAADG…LLLIKKRAPS (85 aa)). Residues 187–231 (DEDERVDETALRQLTEMGFPESRASKALRLNHMSVPQAMEWLIEH) enclose the UBA 1 domain. The disordered stretch occupies residues 235 to 273 (PAIDTPLPGHAAQAEASAAAATSSSSSEAAVGTSVEDEE). Over residues 245–264 (AAQAEASAAAATSSSSSEAA) the composition is skewed to low complexity. A UBA 2 domain is found at 292-332 (RADARAVISLMEMGFDEKEVIDALRVNNNQQNAACEWLLGD). In terms of domain architecture, STI1 spans 357–396 (NPVVQLGLTNPKTLLAFEDMLENPLNSTQWMNDPETGPVM).

In terms of assembly, component of the KPC complex composed of RNF123/KPC1 and UBAC1/KPC2. Interacts (via ubiquitin-like domain) with RNF123. Interacts (via ubiquitin-like and UBA domains) with the proteasome via its N-terminal domain.

The protein localises to the cytoplasm. It functions in the pathway protein modification; protein ubiquitination. Functionally, non-catalytic component of the KPC complex, a E3 ubiquitin-protein ligase complex that mediates polyubiquitination of target proteins, such as CDKN1B and NFKB1. The KPC complex catalyzes polyubiquitination and proteasome-mediated degradation of CDKN1B during G1 phase of the cell cycle. The KPC complex also acts as a key regulator of the NF-kappa-B signaling by promoting maturation of the NFKB1 component of NF-kappa-B by catalyzing ubiquitination of the NFKB1 p105 precursor. Within the KPC complex, UBAC1 acts as an adapter that promotes the transfer of target proteins that have been polyubiquitinated by RNF123/KPC1 to the 26S proteasome. This Rattus norvegicus (Rat) protein is Ubiquitin-associated domain-containing protein 1 (Ubac1).